Consider the following 603-residue polypeptide: UvrABC system protein C (603 aa).

Residues 13 to 92 form the GIY-YIG domain; sequence NGPGVYLMKD…IRKHKPRYNI (80 aa). Residues 202-237 enclose the UVR domain; the sequence is NDLLQKIKEQMAAASERQEYELAARLRDRMFAIQAT.

It belongs to the UvrC family. Interacts with UvrB in an incision complex.

Its subcellular location is the cytoplasm. In terms of biological role, the UvrABC repair system catalyzes the recognition and processing of DNA lesions. UvrC both incises the 5' and 3' sides of the lesion. The N-terminal half is responsible for the 3' incision and the C-terminal half is responsible for the 5' incision. The chain is UvrABC system protein C from Desulfatibacillum aliphaticivorans.